We begin with the raw amino-acid sequence, 250 residues long: Cell division protein ZapD (250 aa).

This sequence belongs to the ZapD family. As to quaternary structure, interacts with FtsZ.

Its subcellular location is the cytoplasm. In terms of biological role, cell division factor that enhances FtsZ-ring assembly. Directly interacts with FtsZ and promotes bundling of FtsZ protofilaments, with a reduction in FtsZ GTPase activity. The sequence is that of Cell division protein ZapD from Pectobacterium carotovorum subsp. carotovorum (strain PC1).